Consider the following 61-residue polypeptide: Small ribosomal subunit protein uS14B (61 aa).

Zn(2+) contacts are provided by Cys-24, Cys-27, Cys-40, and Cys-43.

This sequence belongs to the universal ribosomal protein uS14 family. Zinc-binding uS14 subfamily. In terms of assembly, part of the 30S ribosomal subunit. Contacts proteins S3 and S10. It depends on Zn(2+) as a cofactor.

Functionally, binds 16S rRNA, required for the assembly of 30S particles and may also be responsible for determining the conformation of the 16S rRNA at the A site. This Mycobacterium ulcerans (strain Agy99) protein is Small ribosomal subunit protein uS14B.